A 439-amino-acid polypeptide reads, in one-letter code: Serine/threonine-protein kinase 2 (439 aa).

The region spanning 87–439 (NDDFYHISTG…IFSDWINGGN (353 aa)) is the Protein kinase domain. Residues 93–101 (ISTGGYGIV) and lysine 117 contribute to the ATP site. Aspartate 307 serves as the catalytic Proton acceptor.

The protein belongs to the protein kinase superfamily. Ser/Thr protein kinase family. Poxviruses subfamily. In terms of processing, phosphorylated in vivo. Autophosphorylated in vitro.

Its subcellular location is the host endoplasmic reticulum. The protein resides in the host endoplasmic reticulum-Golgi intermediate compartment. The catalysed reaction is L-seryl-[protein] + ATP = O-phospho-L-seryl-[protein] + ADP + H(+). The enzyme catalyses L-threonyl-[protein] + ATP = O-phospho-L-threonyl-[protein] + ADP + H(+). Functionally, essential serine-protein kinase involved in the early stage of virion morphogenesis. This is Serine/threonine-protein kinase 2 (OPG054) from Vaccinia virus (strain Copenhagen) (VACV).